The chain runs to 1188 residues: Probable phosphoenolpyruvate synthase (1188 aa).

Residues 536–670 (LGGAVLSDGH…LIVGLYRLGI (135 aa)) form the DOD-type homing endonuclease domain. His824 (tele-phosphohistidine intermediate) is an active-site residue. Residues Arg917, Arg964, Glu1061, Gly1083, Thr1084, Asn1085, and Asp1086 each coordinate substrate. A Mg(2+)-binding site is contributed by Glu1061. Asp1086 serves as a coordination point for Mg(2+). The active-site Proton donor is Cys1133.

This sequence belongs to the PEP-utilizing enzyme family. The cofactor is Mg(2+). In terms of processing, this protein undergoes a protein self splicing that involves a post-translational excision of the intervening region (intein) followed by peptide ligation.

The enzyme catalyses pyruvate + ATP + H2O = phosphoenolpyruvate + AMP + phosphate + 2 H(+). It functions in the pathway carbohydrate biosynthesis; gluconeogenesis. Its function is as follows. Catalyzes the phosphorylation of pyruvate to phosphoenolpyruvate. The protein is Probable phosphoenolpyruvate synthase (ppsA) of Methanocaldococcus jannaschii (strain ATCC 43067 / DSM 2661 / JAL-1 / JCM 10045 / NBRC 100440) (Methanococcus jannaschii).